The sequence spans 1048 residues: Calcium-transporting ATPase, endoplasmic reticulum-type (1048 aa).

Over 1-63 (MEEKPFPAWS…WRLVLEQFDD (63 aa)) the chain is Cytoplasmic. A helical transmembrane segment spans residues 64–84 (TLVKILLGAAFISFVLAYVNQ). Residues 85–93 (DETGESGFE) lie on the Lumenal side of the membrane. A helical transmembrane segment spans residues 94 to 114 (AYVEPLVILWILVLNAIVGVW). Residues 115–213 (QESNAEKALE…DCELQAKENM (99 aa)) lie on the Cytoplasmic side of the membrane. The helical transmembrane segment at 214–234 (VFAGTTVVNGSCICIVVNTGM) threads the bilayer. At 235–267 (CTEIGKIQRQIHDASMEESDTPLKKKLDEFGNR) the chain is on the lumenal side. Residues 268–288 (LTFAIGVVCLVVWAINYKYFL) form a helical membrane-spanning segment. The Cytoplasmic segment spans residues 289 to 312 (SWEVVDDWPSDFRFSFEKCAYYFK). The helical transmembrane segment at 313–333 (IAVALAVAAIPEGLPSVITTC) threads the bilayer. Residues valine 319, alanine 320, isoleucine 322, and glutamate 324 each contribute to the Ca(2+) site. Residues 334–800 (LALGTRKMAQ…ISSNVGEVIS (467 aa)) lie on the Lumenal side of the membrane. The 4-aspartylphosphate intermediate role is filled by aspartate 366. Residues aspartate 728 and aspartate 732 each contribute to the Mg(2+) site. 2 residues coordinate Ca(2+): asparagine 794 and glutamate 797. Residues 801–821 (IFLTAVLGIPECLIPVQLLWV) traverse the membrane as a helical segment. Ca(2+) contacts are provided by asparagine 822, threonine 825, and aspartate 826. At 822–862 (NLVTDGPPATALGFNPADVDIMQKPPRKNTDALINSWVFFR) the chain is on the cytoplasmic side. The chain crosses the membrane as a helical span at residues 863-883 (YMVIGSYVGIATVGIFIVWYT). Residues 884–944 (QASFLGINIV…CEYFTVGKVK (61 aa)) lie on the Lumenal side of the membrane. The helical transmembrane segment at 945 to 965 (AMTLSLSVLVAIEMFNSLNAL) threads the bilayer. Glutamate 957 is a Ca(2+) binding site. Residues 966-981 (SEDNSLIKMPPWRNPW) are Cytoplasmic-facing. A helical transmembrane segment spans residues 982–1002 (LLVAMSLSFALHSVILYVPFL). Residues 1003–1007 (ADIFG) lie on the Lumenal side of the membrane. A helical transmembrane segment spans residues 1008 to 1028 (IVPLSLYEWLLVILLSAPVIL). Topologically, residues 1029–1048 (IDEVLKFVGRRRRRTKLKAA) are cytoplasmic.

The protein belongs to the cation transport ATPase (P-type) (TC 3.A.3) family. Type IIA subfamily. 9-fold higher level in roots compared with leaves.

The protein resides in the endoplasmic reticulum membrane. It carries out the reaction Ca(2+)(in) + ATP + H2O = Ca(2+)(out) + ADP + phosphate + H(+). In terms of biological role, this magnesium-dependent enzyme catalyzes the hydrolysis of ATP coupled with the translocation of calcium from the cytosol to an endomembrane compartment. In Solanum lycopersicum (Tomato), this protein is Calcium-transporting ATPase, endoplasmic reticulum-type.